Reading from the N-terminus, the 207-residue chain is Protein lin-7 homolog B (207 aa).

A Kinase interacting site motif is present at residues 1 to 13 (MAALVEPLGLERD). Residues 10–65 (LERDVSRAVELLERLQRSGELPPQKLQALQRVLQSRFCSAIREVYEQLYDTLDITG) form the L27 domain. One can recognise a PDZ domain in the interval 93–175 (VVELPKTDEG…SVKLVVRYTP (83 aa)). Positions 187–207 (KMRSARRRQQHHSYSSLESRG) are disordered. A compositionally biased stretch (polar residues) spans 198–207 (HSYSSLESRG).

It belongs to the lin-7 family. As to quaternary structure, forms two exclusive ternary complexes with CASK and CASKIN1. The brain-specific heterotrimeric complex (LIN-10-LIN-2-LIN-7 complex) composed of at least APBA1, CASK, and LIN7, associates with the motor protein KIF17 to transport vesicles along microtubules. Forms a heterotrimeric complex composed of MMP5, LIN7B and PATJ; the N-terminal L27 domain of PALS1 interacts with the L27 domain of PATJ and the C-terminal L27 domain of PALS1 interacts with the L27 domain of LIN7B. Forms a heterotrimeric complex with DLG1 and CASK via their L27 domains. Interacts with DLG4 and GRIN2B as well as CDH1 and CTNNB1, the channels KCNJ12/Kir2.2, KCNJ4/Kir2.3 and probably KCNJ2/Kir2.1 and SLC6A12/BGT-1 via its PDZ domain. The association of LIN7A with cadherin and beta-catenin is calcium-dependent, occurs at synaptic junctions and requires the actin cytoskeleton. Interacts with EGFR, ERBB2, ERBB3 and ERBB4 with both PDZ and KID domains. Associates with KIF17 via APBA1. Interacts with ASIC3. Interacts with TOPK. Interacts with RTKN. Interacts with APBA1. Interacts with MPP7. Interacts with DLG2. Interacts with DLG3. As to expression, expressed only in brain.

It is found in the cell membrane. Its subcellular location is the basolateral cell membrane. The protein localises to the cell junction. It localises to the postsynaptic density membrane. The protein resides in the tight junction. Its function is as follows. Plays a role in establishing and maintaining the asymmetric distribution of channels and receptors at the plasma membrane of polarized cells. Forms membrane-associated multiprotein complexes that may regulate delivery and recycling of proteins to the correct membrane domains. The tripartite complex composed of LIN7 (LIN7A, LIN7B or LIN7C), CASK and APBA1 associates with the motor protein KIF17 to transport vesicles containing N-methyl-D-aspartate (NMDA) receptor subunit NR2B along microtubules. This complex may have the potential to couple synaptic vesicle exocytosis to cell adhesion in brain. Ensures the proper localization of GRIN2B (subunit 2B of the NMDA receptor) to neuronal postsynaptic density and may function in localizing synaptic vesicles at synapses where it is recruited by beta-catenin and cadherin. Required to localize Kir2 channels, GABA transporter (SLC6A12) and EGFR/ERBB1, ERBB2, ERBB3 and ERBB4 to the basolateral membrane of epithelial cells. May increase the amplitude of ASIC3 acid-evoked currents by stabilizing the channel at the cell surface. The protein is Protein lin-7 homolog B (Lin7b) of Rattus norvegicus (Rat).